A 603-amino-acid chain; its full sequence is Probable methyltransferase PMT20 (603 aa).

Residues 1–16 (MKSGKQSSQPEKGTSR) are Cytoplasmic-facing. A helical; Signal-anchor for type II membrane protein transmembrane segment spans residues 17–37 (ILSLTVLFIAFCGFSFYLGGI). Residues 38-603 (FCSERDKIVA…KLWFSSNQTS (566 aa)) lie on the Lumenal side of the membrane. N313 and N600 each carry an N-linked (GlcNAc...) asparagine glycan.

The protein belongs to the methyltransferase superfamily.

The protein localises to the golgi apparatus membrane. The polypeptide is Probable methyltransferase PMT20 (Arabidopsis thaliana (Mouse-ear cress)).